The chain runs to 121 residues: Two-component response regulator ORR8 (121 aa).

Residues 5–121 (HVLVVDDTHV…VDVPRIMKYI (117 aa)) form the Response regulatory domain. The residue at position 55 (Asp55) is a 4-aspartylphosphate.

The protein belongs to the ARR family. Type-A subfamily. In terms of processing, two-component system major event consists of a His-to-Asp phosphorelay between a sensor histidine kinase (HK) and a response regulator (RR). In plants, the His-to-Asp phosphorelay involves an additional intermediate named Histidine-containing phosphotransfer protein (HPt). This multistep phosphorelay consists of a His-Asp-His-Asp sequential transfer of a phosphate group between first a His and an Asp of the HK protein, followed by the transfer to a conserved His of the HPt protein and finally the transfer to an Asp in the receiver domain of the RR protein. As to expression, expressed in mature leaves, and at low levels in roots, shoots and flowers.

Functionally, functions as a response regulator involved in His-to-Asp phosphorelay signal transduction system. Phosphorylation of the Asp residue in the receiver domain activates the ability of the protein to promote the transcription of target genes. Type-A response regulators seem to act as negative regulators of the cytokinin signaling. The chain is Two-component response regulator ORR8 from Oryza sativa subsp. indica (Rice).